Consider the following 380-residue polypeptide: Chaperone protein DnaJ (380 aa).

Residues 5–70 (DYYEVLGLQK…EKRAAYDQYG (66 aa)) enclose the J domain. Residues 136–214 (GCKKDIRIST…CHGDGRVQKA (79 aa)) form a CR-type zinc finger. C149, C152, C166, C169, C188, C191, C202, and C205 together coordinate Zn(2+). CXXCXGXG motif repeat units lie at residues 149 to 156 (CDTCHGSG), 166 to 173 (CSHCHGSG), 188 to 195 (CPSCHGSG), and 202 to 209 (CKSCHGDG).

The protein belongs to the DnaJ family. As to quaternary structure, homodimer. It depends on Zn(2+) as a cofactor.

The protein resides in the cytoplasm. Functionally, participates actively in the response to hyperosmotic and heat shock by preventing the aggregation of stress-denatured proteins and by disaggregating proteins, also in an autonomous, DnaK-independent fashion. Unfolded proteins bind initially to DnaJ; upon interaction with the DnaJ-bound protein, DnaK hydrolyzes its bound ATP, resulting in the formation of a stable complex. GrpE releases ADP from DnaK; ATP binding to DnaK triggers the release of the substrate protein, thus completing the reaction cycle. Several rounds of ATP-dependent interactions between DnaJ, DnaK and GrpE are required for fully efficient folding. Also involved, together with DnaK and GrpE, in the DNA replication of plasmids through activation of initiation proteins. The protein is Chaperone protein DnaJ of Actinobacillus pleuropneumoniae serotype 5b (strain L20).